Reading from the N-terminus, the 503-residue chain is Cell wall integrity and stress response component 2 (503 aa).

The signal sequence occupies residues Met1–Ala23. At Asp24–Gly325 the chain is on the extracellular side. The WSC domain maps to Gln25–Asn118. The tract at residues Asp124–Thr260 is disordered. A helical membrane pass occupies residues Val326 to Val346. The Cytoplasmic segment spans residues Trp347 to Arg503. Position 402 is a phosphothreonine (Thr402). Phosphoserine occurs at positions 455 and 458. Positions Ile470–Arg503 are disordered.

Post-translationally, N-glycosylated.

The protein resides in the cell membrane. The polypeptide is Cell wall integrity and stress response component 2 (WSC2) (Saccharomyces cerevisiae (strain ATCC 204508 / S288c) (Baker's yeast)).